The sequence spans 162 residues: uncharacterized protein (162 aa).

This sequence belongs to the A.longa ORF167/ORF288 family.

It localises to the plastid. This is an uncharacterized protein from Euglena longa (Euglenophycean alga).